We begin with the raw amino-acid sequence, 1923 residues long: Callose synthase 5 (1923 aa).

Residues 1 to 10 (MAQSSTSHDS) are compositionally biased toward polar residues. The tract at residues 1–22 (MAQSSTSHDSGPQGLMRRPSRS) is disordered. The Cytoplasmic segment spans residues 1 to 481 (MAQSSTSHDS…ETRTFWHIYH (481 aa)). Residues 482–502 (SFDRLWTFYLLALQAMIILAF) form a helical membrane-spanning segment. Residues 503–521 (ERVELREILRKDVLYALSS) are Extracellular-facing. The helical transmembrane segment at 522-542 (IFITAAFLRFLQSVLDVILNF) threads the bilayer. Over 543–559 (PGFHRWKFTDVLRNILK) the chain is Cytoplasmic. Residues 560 to 580 (IVVSLAWCVVLPLCYAQSVSF) traverse the membrane as a helical segment. Residues 581–601 (APGKLKQWLSFLPQVKGVPPL) lie on the Extracellular side of the membrane. Residues 602–622 (YIMAVALYLLPNVLAAIMFIF) traverse the membrane as a helical segment. Topologically, residues 623 to 658 (PMLRRWIENSDWHIFRLLLWWSQPRIYVGRGMHESQ) are cytoplasmic. The helical transmembrane segment at 659-679 (IALIKYTIFWLLLFCCKFAFS) threads the bilayer. Residues 680 to 719 (YFLQVKLLVKPTNAIMSIRHVKYKWHEFFPNAEHNYGAVV) lie on the Extracellular side of the membrane. Residues 720–740 (SLWLPVILVYFMDTQIWYAIF) traverse the membrane as a helical segment. Topologically, residues 741-1486 (STICGGVIGA…FDFFRMMSCY (746 aa)) are cytoplasmic. The chain crosses the membrane as a helical span at residues 1487–1507 (FTTVGFYISSMIVVLTVYAFL). Topologically, residues 1508–1535 (YGRLYLSLSGVEEAIVKFAAAKGDSSLK) are extracellular. The helical transmembrane segment at 1536–1556 (AAMASQSVVQLGLLMTLPMVM) threads the bilayer. Topologically, residues 1557–1566 (EIGLERGFRT) are cytoplasmic. Residues 1567 to 1587 (ALSDLIIMQLQLAPVFFTFSL) form a helical membrane-spanning segment. Residues 1588–1630 (GTKVHYYGRTILHGGSKYRATGRGFVVKHEKFAENYRMYSRSH) lie on the Extracellular side of the membrane. Residues 1631-1651 (FVKGMELMVLLICYRIYGKAA) form a helical membrane-spanning segment. The Cytoplasmic segment spans residues 1652 to 1657 (EDSVGY). Residues 1658–1678 (ALVMGSTWFLVGSWLFAPFFF) form a helical membrane-spanning segment. Topologically, residues 1679–1732 (NPSGFEWQKIVDDWDDWNKWISSRGGIGVPANKSWESWWEEEQEHLLHSGFFGK) are extracellular. Asparagine 1710 is a glycosylation site (N-linked (GlcNAc...) asparagine). Residues 1733–1755 (FWEIFLSLRYFIYQYGIVYQLNL) traverse the membrane as a helical segment. Residues 1756 to 1766 (TKESRMGKQHS) lie on the Cytoplasmic side of the membrane. The helical transmembrane segment at 1767–1787 (IIVYGLSWLVIVAVMIVLKIV) threads the bilayer. Residues 1788 to 1803 (SMGRKKFSADFQLMFR) are Extracellular-facing. A helical membrane pass occupies residues 1804-1824 (LLKLFLFIGSVVIVGMLFHFL). Lysine 1825 is a topological domain (cytoplasmic). Residues 1826 to 1846 (LTVGDIMQSLLAFLPTGWALL) form a helical membrane-spanning segment. The Extracellular portion of the chain corresponds to 1847–1873 (QISQVARPLMKTVGMWGSVKALARGYE). A helical membrane pass occupies residues 1874–1894 (YIMGVVIFMPVTVLAWFPFVS). Residues 1895-1923 (EFQTRLLFNQAFSRGLQIQRILAGGKKQK) lie on the Cytoplasmic side of the membrane.

The protein belongs to the glycosyltransferase 48 family.

It is found in the cell membrane. The enzyme catalyses [(1-&gt;3)-beta-D-glucosyl](n) + UDP-alpha-D-glucose = [(1-&gt;3)-beta-D-glucosyl](n+1) + UDP + H(+). Required for the formation of the callose wall separating the tetraspores (interstitial wall) and surrounding the pollen mother cells (peripheral wall). Required for exine formation on pollen wall. May be involved in callose synthesis during pollen tube growth. During plant growth and development, callose is found as a transitory component of the cell plate in dividing cells, is a major component of pollen mother cell walls and pollen tubes, and is found as a structural component of plasmodesmatal canals. This chain is Callose synthase 5 (CALS5), found in Arabidopsis thaliana (Mouse-ear cress).